A 1348-amino-acid chain; its full sequence is ABC multidrug transporter atrD (1348 aa).

Residues 1–10 (MSPLETNPLS) show a composition bias toward polar residues. Residues 1–67 (MSPLETNPLS…HRPKSSSSNN (67 aa)) form a disordered region. The span at 20-31 (ETSTTEEQASTP) shows a compositional bias: low complexity. Asn99 carries N-linked (GlcNAc...) asparagine glycosylation. Transmembrane regions (helical) follow at residues 114–134 (ILIM…LPLF), 168–188 (YFVY…VGFI), 240–260 (KVGL…IAYV), and 268–288 (ICSS…QFII). Residues 118–408 (VISTICAIAA…VSPNAQAFTN (291 aa)) enclose the ABC transmembrane type-1 1 domain. A glycan (N-linked (GlcNAc...) asparagine) is linked at Asn314. 2 helical membrane passes run 344-364 (IVMG…YGLG) and 371-391 (FLVD…AILI). The ABC transporter 1 domain occupies 443-688 (IELRNVKHIY…GGAYRKLVEA (246 aa)). 478–485 (GPSGSGKS) serves as a coordination point for ATP. A glycan (N-linked (GlcNAc...) asparagine) is linked at Asn550. The next 2 helical transmembrane spans lie at 778–798 (MLIG…QAVL) and 825–845 (LMFF…GAAF). Residues 779–1068 (LIGLVFSVLA…VFSFAPDMGK (290 aa)) form the ABC transmembrane type-1 2 domain. Asn877 is a glycosylation site (N-linked (GlcNAc...) asparagine). The next 4 membrane-spanning stretches (helical) occupy residues 892 to 912 (HLSG…TTLG), 925 to 947 (LALV…FYML), 1015 to 1035 (ALVF…LGHH), and 1042 to 1062 (FFVC…VFSF). Asn1088 carries an N-linked (GlcNAc...) asparagine glycan. The ABC transporter 2 domain maps to 1103-1341 (IEFRNVHFRY…KGRYYELVNL (239 aa)). ATP is bound at residue 1138–1145 (GPSGCGKS).

Belongs to the ABC transporter superfamily. ABCB family. Multidrug resistance exporter (TC 3.A.1.201) subfamily.

It localises to the cell membrane. Its activity is regulated as follows. Fenamirol efflux transporter activity is inhibited by the cyclosporin derivative PSC 833, nigericin, reserpine and valinomycin. The effect of reserpine is transiant, while that of the cyclosporin derivative PSC 833, nigericin and valinomycin is proportional to the time of exposure. Cyclohexinmide has inhibitory effect only when applied prior to addition of the fungicide. Its function is as follows. Pleiotropic ABC efflux transporter involved in the protection of the cells against a wide range of toxic compounds. Confers resistance to the azole fenarimol via efflux transport. May also be involved in the secretion of penicillin. In Emericella nidulans (Aspergillus nidulans), this protein is ABC multidrug transporter atrD.